Here is a 110-residue protein sequence, read N- to C-terminus: Parvalbumin alpha (110 aa).

EF-hand domains follow at residues 39–74 (KNAKDVEAVFYILDKDKSGFIEEDELKSVLKCFAPE) and 78–110 (LSEKETKDLLTAGDEDGDGKIGVSEFIQLVANS). 11 residues coordinate Ca(2+): Asp-52, Asp-54, Ser-56, Phe-58, Glu-60, Glu-63, Asp-91, Asp-93, Asp-95, Lys-97, and Glu-102.

It belongs to the parvalbumin family.

In muscle, parvalbumin is thought to be involved in relaxation after contraction. It binds two calcium ions. This is Parvalbumin alpha from Callorhinchus milii (Ghost shark).